Consider the following 371-residue polypeptide: Cytochrome b (371 aa).

Transmembrane regions (helical) follow at residues 25–45 (FGSM…FLAV), 69–90 (WMMQ…YIHI), 105–125 (WMSG…GYVL), and 170–190 (FFAL…LHII). Positions 75 and 89 each coordinate heme b. Residues His174 and His188 each contribute to the heme b site. A ubiquinone is bound at residue His193. A run of 4 helical transmembrane segments spans residues 218–238 (HKDL…VSFS), 280–300 (LGGA…PFTH), 312–332 (LSQL…WAAT), and 339–358 (FIII…LSIP).

It belongs to the cytochrome b family. The cytochrome bc1 complex contains 3 respiratory subunits (MT-CYB, CYC1 and UQCRFS1), 2 core proteins (UQCRC1 and UQCRC2) and probably 6 low-molecular weight proteins. Heme b is required as a cofactor.

It is found in the mitochondrion inner membrane. Component of the ubiquinol-cytochrome c reductase complex (complex III or cytochrome b-c1 complex) that is part of the mitochondrial respiratory chain. The b-c1 complex mediates electron transfer from ubiquinol to cytochrome c. Contributes to the generation of a proton gradient across the mitochondrial membrane that is then used for ATP synthesis. This Antaresia childreni (Children's python) protein is Cytochrome b (MT-CYB).